We begin with the raw amino-acid sequence, 1044 residues long: Outer dynein arm-docking complex subunit 2 (1044 aa).

Composition is skewed to basic and acidic residues over residues 317–338 (IKFS…EVAI) and 379–401 (SKDR…EKSR). Disordered stretches follow at residues 317 to 409 (IKFS…PGRA) and 423 to 446 (ISDS…ANAD). 5 HEAT repeats span residues 448-485 (PSEY…AQET), 487-527 (QLAI…NPQI), 530-568 (NIVD…FRRA), 627-665 (AIRK…EENY), and 668-706 (AIKA…DEET). 11 ARM repeats span residues 484-523 (ETCQ…EISH), 525-564 (PQIR…NVAK), 535-577 (GGLP…RHGG), 622-661 (YANK…ECAS), 663-702 (ENYR…QCAE), 746-785 (KENV…ECCQ), 828-867 (PESM…PCIQ), 871-910 (DAGE…NIAK), 912-951 (QENL…RCCM), 953-992 (GRNR…QLSE), and 1004-1031 (GAVK…ISNI). HEAT repeat units follow at residues 831-870 (MMII…QNAK), 874-914 (EMVR…DQEN), 916-955 (AVIT…WGRN), 958-996 (AFGE…DADN), and 999-1037 (TMHE…LALA).

In terms of assembly, component of the outer dynein arm-docking complex along with ODAD1, ODAD3, ODAD4 and CLXN. Interacts with CFAP61. As to expression, expressed in trachea multiciliated cells.

It is found in the cytoplasm. It localises to the cytoskeleton. The protein resides in the cilium axoneme. The protein localises to the cilium basal body. Its function is as follows. Component of the outer dynein arm-docking complex (ODA-DC) that mediates outer dynein arms (ODA) binding onto the doublet microtubule. Involved in mediating assembly of both ODAs and their axonemal docking complex onto ciliary microtubules. This chain is Outer dynein arm-docking complex subunit 2 (ODAD2), found in Bos taurus (Bovine).